An 86-amino-acid chain; its full sequence is Large ribosomal subunit protein uL23 (86 aa).

This sequence belongs to the universal ribosomal protein uL23 family. Part of the 50S ribosomal subunit. Contacts protein L29.

In terms of biological role, binds to 23S rRNA. One of the proteins that surrounds the polypeptide exit tunnel on the outside of the ribosome. The polypeptide is Large ribosomal subunit protein uL23 (Thermococcus kodakarensis (strain ATCC BAA-918 / JCM 12380 / KOD1) (Pyrococcus kodakaraensis (strain KOD1))).